The sequence spans 29 residues: Glucagon (29 aa).

It belongs to the glucagon family.

Its subcellular location is the secreted. In terms of biological role, glucagon plays a key role in glucose metabolism and homeostasis. Regulates blood glucose by increasing gluconeogenesis and decreasing glycolysis. The protein is Glucagon (gcg) of Polypterus senegalus (Senegal bichir).